Reading from the N-terminus, the 115-residue chain is T cell receptor beta variable 11-2 (115 aa).

The first 21 residues, 1 to 21 (MGTRLLCWAALCLLGAELTEA), serve as a signal peptide directing secretion. Positions 22–115 (GVAQSPRYKI…SAVYLCASSL (94 aa)) constitute an Ig-like domain. Cys42 and Cys111 are oxidised to a cystine.

Alpha-beta TR is a heterodimer composed of an alpha and beta chain; disulfide-linked. The alpha-beta TR is associated with the transmembrane signaling CD3 coreceptor proteins to form the TR-CD3 (TcR or TCR). The assembly of alpha-beta TR heterodimers with CD3 occurs in the endoplasmic reticulum where a single alpha-beta TR heterodimer associates with one CD3D-CD3E heterodimer, one CD3G-CD3E heterodimer and one CD247 homodimer forming a stable octameric structure. CD3D-CD3E and CD3G-CD3E heterodimers preferentially associate with TR alpha and TR beta chains, respectively. The association of the CD247 homodimer is the last step of TcR assembly in the endoplasmic reticulum and is required for transport to the cell surface.

It is found in the cell membrane. In terms of biological role, v region of the variable domain of T cell receptor (TR) beta chain that participates in the antigen recognition. Alpha-beta T cell receptors are antigen specific receptors which are essential to the immune response and are present on the cell surface of T lymphocytes. Recognize peptide-major histocompatibility (MH) (pMH) complexes that are displayed by antigen presenting cells (APC), a prerequisite for efficient T cell adaptive immunity against pathogens. Binding of alpha-beta TR to pMH complex initiates TR-CD3 clustering on the cell surface and intracellular activation of LCK that phosphorylates the ITAM motifs of CD3G, CD3D, CD3E and CD247 enabling the recruitment of ZAP70. In turn ZAP70 phosphorylates LAT, which recruits numerous signaling molecules to form the LAT signalosome. The LAT signalosome propagates signal branching to three major signaling pathways, the calcium, the mitogen-activated protein kinase (MAPK) kinase and the nuclear factor NF-kappa-B (NF-kB) pathways, leading to the mobilization of transcription factors that are critical for gene expression and essential for T cell growth and differentiation. The T cell repertoire is generated in the thymus, by V-(D)-J rearrangement. This repertoire is then shaped by intrathymic selection events to generate a peripheral T cell pool of self-MH restricted, non-autoaggressive T cells. Post-thymic interaction of alpha-beta TR with the pMH complexes shapes TR structural and functional avidity. The chain is T cell receptor beta variable 11-2 from Homo sapiens (Human).